A 284-amino-acid chain; its full sequence is Shikimate dehydrogenase (NADP(+)) (284 aa).

Residues 20–22 and serine 67 contribute to the shikimate site; that span reads SIS. Catalysis depends on lysine 71, which acts as the Proton acceptor. Residue aspartate 83 participates in NADP(+) binding. The shikimate site is built by asparagine 92 and aspartate 107. Residues 129–133 and isoleucine 227 contribute to the NADP(+) site; that span reads GAGGA. A shikimate-binding site is contributed by tyrosine 229. Glycine 250 contributes to the NADP(+) binding site.

Belongs to the shikimate dehydrogenase family. As to quaternary structure, homodimer.

The catalysed reaction is shikimate + NADP(+) = 3-dehydroshikimate + NADPH + H(+). The protein operates within metabolic intermediate biosynthesis; chorismate biosynthesis; chorismate from D-erythrose 4-phosphate and phosphoenolpyruvate: step 4/7. Involved in the biosynthesis of the chorismate, which leads to the biosynthesis of aromatic amino acids. Catalyzes the reversible NADPH linked reduction of 3-dehydroshikimate (DHSA) to yield shikimate (SA). The polypeptide is Shikimate dehydrogenase (NADP(+)) (Streptococcus pneumoniae (strain P1031)).